An 880-amino-acid chain; its full sequence is Alanine--tRNA ligase (880 aa).

Zn(2+) contacts are provided by His567, His571, Cys669, and His673.

Belongs to the class-II aminoacyl-tRNA synthetase family. The cofactor is Zn(2+).

The protein localises to the cytoplasm. It catalyses the reaction tRNA(Ala) + L-alanine + ATP = L-alanyl-tRNA(Ala) + AMP + diphosphate. Functionally, catalyzes the attachment of alanine to tRNA(Ala) in a two-step reaction: alanine is first activated by ATP to form Ala-AMP and then transferred to the acceptor end of tRNA(Ala). Also edits incorrectly charged Ser-tRNA(Ala) and Gly-tRNA(Ala) via its editing domain. This is Alanine--tRNA ligase from Bacillus mycoides (strain KBAB4) (Bacillus weihenstephanensis).